Here is a 341-residue protein sequence, read N- to C-terminus: tRNA N6-adenosine threonylcarbamoyltransferase (341 aa).

2 residues coordinate Fe cation: His117 and His121. Substrate contacts are provided by residues 139–143 (VVSGG), Asp172, Gly185, Asp189, and Asn278. Asp307 contributes to the Fe cation binding site.

It belongs to the KAE1 / TsaD family. Fe(2+) serves as cofactor.

It localises to the cytoplasm. It catalyses the reaction L-threonylcarbamoyladenylate + adenosine(37) in tRNA = N(6)-L-threonylcarbamoyladenosine(37) in tRNA + AMP + H(+). In terms of biological role, required for the formation of a threonylcarbamoyl group on adenosine at position 37 (t(6)A37) in tRNAs that read codons beginning with adenine. Is involved in the transfer of the threonylcarbamoyl moiety of threonylcarbamoyl-AMP (TC-AMP) to the N6 group of A37, together with TsaE and TsaB. TsaD likely plays a direct catalytic role in this reaction. The sequence is that of tRNA N6-adenosine threonylcarbamoyltransferase from Bacillus licheniformis (strain ATCC 14580 / DSM 13 / JCM 2505 / CCUG 7422 / NBRC 12200 / NCIMB 9375 / NCTC 10341 / NRRL NRS-1264 / Gibson 46).